A 138-amino-acid polypeptide reads, in one-letter code: Holo-[acyl-carrier-protein] synthase (138 aa).

Mg(2+)-binding residues include D11 and E65.

The protein belongs to the P-Pant transferase superfamily. AcpS family. The cofactor is Mg(2+).

The protein resides in the cytoplasm. It carries out the reaction apo-[ACP] + CoA = holo-[ACP] + adenosine 3',5'-bisphosphate + H(+). Functionally, transfers the 4'-phosphopantetheine moiety from coenzyme A to a Ser of acyl-carrier-protein. In Ralstonia nicotianae (strain ATCC BAA-1114 / GMI1000) (Ralstonia solanacearum), this protein is Holo-[acyl-carrier-protein] synthase.